Here is a 426-residue protein sequence, read N- to C-terminus: Glutamate-1-semialdehyde 2,1-aminomutase (426 aa).

An N6-(pyridoxal phosphate)lysine modification is found at lysine 265.

Belongs to the class-III pyridoxal-phosphate-dependent aminotransferase family. HemL subfamily. Homodimer. The cofactor is pyridoxal 5'-phosphate.

It is found in the cytoplasm. The enzyme catalyses (S)-4-amino-5-oxopentanoate = 5-aminolevulinate. The protein operates within porphyrin-containing compound metabolism; protoporphyrin-IX biosynthesis; 5-aminolevulinate from L-glutamyl-tRNA(Glu): step 2/2. The chain is Glutamate-1-semialdehyde 2,1-aminomutase from Escherichia coli O9:H4 (strain HS).